A 180-amino-acid chain; its full sequence is Small ribosomal subunit protein uS4 (180 aa).

The S4 RNA-binding domain maps to 103–165 (RRLQTLVYKK…KNSPFAKESH (63 aa)).

This sequence belongs to the universal ribosomal protein uS4 family. As to quaternary structure, part of the 30S ribosomal subunit. Contacts protein S5. The interaction surface between S4 and S5 is involved in control of translational fidelity.

One of the primary rRNA binding proteins, it binds directly to 16S rRNA where it nucleates assembly of the body of the 30S subunit. Its function is as follows. With S5 and S12 plays an important role in translational accuracy. The protein is Small ribosomal subunit protein uS4 of Thermococcus gammatolerans (strain DSM 15229 / JCM 11827 / EJ3).